Consider the following 69-residue polypeptide: Small ribosomal subunit protein uS7 (69 aa).

Belongs to the universal ribosomal protein uS7 family. In terms of assembly, part of the 30S ribosomal subunit.

Its function is as follows. One of the primary rRNA binding proteins, it binds directly to 16S rRNA where it nucleates assembly of the head domain of the 30S subunit. Is located at the subunit interface close to the decoding center. The sequence is that of Small ribosomal subunit protein uS7 (rps7) from Methanococcoides methylutens.